Reading from the N-terminus, the 685-residue chain is Protein argonaute (685 aa).

The N-terminal domain stretch occupies residues 1-99; the sequence is MNHLGKTEVF…LYPKGRRPLD (99 aa). The tract at residues 100 to 176 is linker L1; sequence PKDPGERSVL…VDPAYRILCE (77 aa). The 97-residue stretch at 169–265 folds into the PAZ domain; that stretch reads PAYRILCEMS…HLTGLLVPVL (97 aa). The interval 272–337 is linker L2; sequence EEEGSLALSL…SKPADALRVG (66 aa). Residues 338-463 are mid domain; the sequence is FYRAQETALA…LLAKAGLQVV (126 aa). The tract at residues 464–685 is PIWI domain; sequence ALSGAYPAEL…EVDREKLFFV (222 aa). Residues D478, E512, D546, and D660 contribute to the active site. Residue D478 participates in Mn(2+) binding. The Piwi domain occupies 507–671; that stretch reads EAQAGERIPQ…LVKEVGRLGI (165 aa). Mn(2+) is bound by residues D546, D660, and V685.

The protein belongs to the argonaute family. Long pAgo subfamily. In terms of assembly, coimmunoprecipitates with a number of proteins involved in DNA replication or recombination including RepA (initiates replication), AddA/B (TT_C0638 and TT_C0639), ArgR, GyrA/B, HU (TT_C0984), PriA, Rad52 (TT_C1923), RecJ, SSB, TopA and UvrB. Most proteins remain associated with TtAgo after DNase treatment and associate with catalytically inactive protein. Mn(2+) serves as cofactor.

Functionally, a DNA-guided ssDNA endonuclease. Uses short ssDNA sequences as guides (gDNA, also called small interfering DNA, siDNA) to bind complementary DNA target strands, resulting in cleavage of the target DNA (tDNA). The cleavage site is 10 nucleotides (nt) downstream of the target residue base-paired with the 5'-end of the gDNA. Plays a role in completion of DNA replication, participates in decatenating replicated DNA and plasmid. In situ purifies with 5'-phosphorylated long DNA (about 1160 nt, maps to the whole chromosome and plasmid), 25-35 nt RNAs that map to the whole chromosome and 15-18 nt DNA that maps to the replication terminus region (ter) on the chromosome and plasmid. Most short DNA starts with dC. Has been shown to have guide sequence-independent dsDNase activity called 'chopping', which requires unstable DNA (high AT-content, multiple mismatches or low salt conditions), and could be used to generate gDNA. Preferentially binds tDNA with dC at its 3'-terminus. Has also been shown to have no detectable guide sequence-independent dsDNase activity. The latter study proposes TtAgo may acquire gDNA from nicked dsDNA, by binding to 5'-phosphorylated-dC nicks, then cleaving 10 nt away on the opposite strand; subsequently an exonuclease (maybe AddA-AddB helicase/nuclease) trims the ends to generate the gDNA. In terms of biological role, involved in defense against invading mobile genetic elements. TtAgo interferes with plasmid DNA, stimulates expression of specific endogenous genes, including various CRISPR loci and at least part of the CRISPR adaptation machinery, but only when exogenous plasmid DNA is present. Upon purification from E.coli associates with gDNA 13-25 nt long with 5'-phosphorylated ends and with 10-150 nt RNA with 5'-OH. DNA corresponds to the expression plasmid rather than chromosomal DNA; 89% of gDNA starts with dC and 72% has dA in the second position. Endonucleolytically cleaves tDNA with 5'-phosphorylated gDNA but not 5'-phosphorylated gRNA; the active site is involved in processing or binding of ssDNA. Nicks or linearizes supercoiled plasmid target when it has the appropriate gDNA sequences, does not cleave linear tDNA. Positions 4 to 16 of the tDNA need to be base paired to the gDNA for efficient tDNA cleavage. Although the system can support single nucleotide insertions in either the gDNA or tDNA, in all cases cleavage activity is reduced, with a wide range of sequence- and position-specific effects. Its function is as follows. First characterized as a DNA-guided RNA endonuclease. Uses gDNA to bind complementary RNA target strands, resulting in cleavage of the target RNA. The cleavage site is 10 nucleotides (nt) downstream of the target residue base-paired with the 5'-end of the guide DNA. In Thermus thermophilus (strain ATCC BAA-163 / DSM 7039 / HB27), this protein is Protein argonaute.